The following is a 146-amino-acid chain: 3-hydroxyacyl-[acyl-carrier-protein] dehydratase FabZ (146 aa).

Histidine 49 is an active-site residue.

It belongs to the thioester dehydratase family. FabZ subfamily.

Its subcellular location is the cytoplasm. The catalysed reaction is a (3R)-hydroxyacyl-[ACP] = a (2E)-enoyl-[ACP] + H2O. Its function is as follows. Involved in unsaturated fatty acids biosynthesis. Catalyzes the dehydration of short chain beta-hydroxyacyl-ACPs and long chain saturated and unsaturated beta-hydroxyacyl-ACPs. This chain is 3-hydroxyacyl-[acyl-carrier-protein] dehydratase FabZ, found in Pseudomonas aeruginosa (strain LESB58).